The primary structure comprises 179 residues: Large ribosomal subunit protein uL10 (179 aa).

The protein belongs to the universal ribosomal protein uL10 family. In terms of assembly, part of the ribosomal stalk of the 50S ribosomal subunit. The N-terminus interacts with L11 and the large rRNA to form the base of the stalk. The C-terminus forms an elongated spine to which L12 dimers bind in a sequential fashion forming a multimeric L10(L12)X complex.

In terms of biological role, forms part of the ribosomal stalk, playing a central role in the interaction of the ribosome with GTP-bound translation factors. This chain is Large ribosomal subunit protein uL10, found in Mycolicibacterium gilvum (strain PYR-GCK) (Mycobacterium gilvum (strain PYR-GCK)).